Here is a 539-residue protein sequence, read N- to C-terminus: Phosphoenolpyruvate carboxykinase (ATP) (539 aa).

Positions 59, 200, and 206 each coordinate substrate. ATP contacts are provided by residues Lys206, His225, and 242–250 (GLSGTGKTT). Lys206 and His225 together coordinate Mn(2+). Residue Asp263 participates in Mn(2+) binding. ATP-binding positions include Glu291, Arg327, 447–448 (RI), and Thr453. Arg327 contacts substrate.

This sequence belongs to the phosphoenolpyruvate carboxykinase (ATP) family. The cofactor is Mn(2+).

It is found in the cytoplasm. The enzyme catalyses oxaloacetate + ATP = phosphoenolpyruvate + ADP + CO2. It functions in the pathway carbohydrate biosynthesis; gluconeogenesis. Involved in the gluconeogenesis. Catalyzes the conversion of oxaloacetate (OAA) to phosphoenolpyruvate (PEP) through direct phosphoryl transfer between the nucleoside triphosphate and OAA. In Selenomonas ruminantium, this protein is Phosphoenolpyruvate carboxykinase (ATP).